The primary structure comprises 423 residues: CinA-like protein (423 aa).

The protein belongs to the CinA family.

This is CinA-like protein from Desulforapulum autotrophicum (strain ATCC 43914 / DSM 3382 / VKM B-1955 / HRM2) (Desulfobacterium autotrophicum).